The chain runs to 420 residues: Gamma-glutamyl phosphate reductase (420 aa).

The protein belongs to the gamma-glutamyl phosphate reductase family.

The protein localises to the cytoplasm. The enzyme catalyses L-glutamate 5-semialdehyde + phosphate + NADP(+) = L-glutamyl 5-phosphate + NADPH + H(+). It participates in amino-acid biosynthesis; L-proline biosynthesis; L-glutamate 5-semialdehyde from L-glutamate: step 2/2. Its function is as follows. Catalyzes the NADPH-dependent reduction of L-glutamate 5-phosphate into L-glutamate 5-semialdehyde and phosphate. The product spontaneously undergoes cyclization to form 1-pyrroline-5-carboxylate. This chain is Gamma-glutamyl phosphate reductase, found in Cereibacter sphaeroides (strain KD131 / KCTC 12085) (Rhodobacter sphaeroides).